Here is a 631-residue protein sequence, read N- to C-terminus: MFNRRLLRHVRYAFQQVRSNHSLQERIDAIPIERYRNFSIVAHVDHGKSTLSDRLLELTNVIKPGGKQVLDKLEVERERGITIKAQTCSMFYQDPRTKLDYLLHLVDTPGHVDFRAEVSRSYASCGGALLLVDASQGVQAQTVANFYLAYSMDLKLIPVINKIDLDIADIDQAEEQVENMFELPKSDCIKVSAKTGLHVEQLLPAIVDRIPPPTGKVEKPLRALLVDSWYDSYLGVVLLVHIVDGQVKRGDKIITAANGLKYEVRECGIMYPDRVATNTLKSGQVGYLVPGMKESKDAKIGDTLMHLGKESITEVLPGFEEPKPMVFVGAFPADGAEFKALDDDISRLVLNDRSVSLQRETSNALGQGWRLGFLGSLHASVFTERLEKEYGSKLILTQPTVPFLIKFKDGEKKIITNPDDFPDLSLRRSNLESLEEPFVEAIMTLPQEYLGKVIQLCDDSHGVQKEITYLNMTGQVMLRYELPLSYLVDDFFGKLKSVSRGYASLDYEDVGYKQSDIVKLELLVNGKSVDALAQVMHRDQTEHIGKEWVKKFKKFIKSQLFEVVIQARANNKIIARETIKAKRKDVLSKLHASDISRRKKLLSKQKQGKKNMKTVGNIQINQDAFQSFLRR.

The transit peptide at 1-19 (MFNRRLLRHVRYAFQQVRS) directs the protein to the mitochondrion. Positions 33–214 (ERYRNFSIVA…AIVDRIPPPT (182 aa)) constitute a tr-type G domain. GTP is bound by residues 42 to 49 (AHVDHGKS), 107 to 111 (DTPGH), and 161 to 164 (NKID).

Belongs to the TRAFAC class translation factor GTPase superfamily. Classic translation factor GTPase family. LepA subfamily.

It localises to the mitochondrion inner membrane. The catalysed reaction is GTP + H2O = GDP + phosphate + H(+). In terms of biological role, promotes mitochondrial protein synthesis. May act as a fidelity factor of the translation reaction, by catalyzing a one-codon backward translocation of tRNAs on improperly translocated ribosomes. Binds to mitochondrial ribosomes in a GTP-dependent manner. This is Translation factor GUF1, mitochondrial from Kluyveromyces lactis (strain ATCC 8585 / CBS 2359 / DSM 70799 / NBRC 1267 / NRRL Y-1140 / WM37) (Yeast).